Reading from the N-terminus, the 609-residue chain is tRNA uridine 5-carboxymethylaminomethyl modification enzyme MnmG (609 aa).

FAD contacts are provided by residues 11 to 16 (GAGHAG), Val-123, and Thr-178. 270 to 284 (GPRYCPSIEDKVVRF) lines the NAD(+) pocket. Residue Gln-367 coordinates FAD.

It belongs to the MnmG family. In terms of assembly, homodimer. Heterotetramer of two MnmE and two MnmG subunits. The cofactor is FAD.

The protein resides in the cytoplasm. Its function is as follows. NAD-binding protein involved in the addition of a carboxymethylaminomethyl (cmnm) group at the wobble position (U34) of certain tRNAs, forming tRNA-cmnm(5)s(2)U34. The polypeptide is tRNA uridine 5-carboxymethylaminomethyl modification enzyme MnmG (Mycoplasmopsis synoviae (strain 53) (Mycoplasma synoviae)).